The primary structure comprises 462 residues: Cytochrome P450 20A1 (462 aa).

Residues 4–24 (FAIFAVTFLLALVGAVLYLYP) form a helical membrane-spanning segment. Cys409 contacts heme.

It belongs to the cytochrome P450 family. Heme is required as a cofactor.

The protein localises to the membrane. This Bos taurus (Bovine) protein is Cytochrome P450 20A1 (CYP20A1).